Reading from the N-terminus, the 349-residue chain is Core protein VP7 (349 aa).

Residue N287 is glycosylated (N-linked (GlcNAc...) asparagine; by host).

Belongs to the orbivirus VP7 family. In terms of assembly, homotrimer that assemble in a complex of 260 capsomers on an inner scaffold composed of VP3.

Its subcellular location is the virion. The VP7 protein is one of the five proteins (with VP1, VP3, VP4, and VP6) which form the inner capsid of the virus. This Antilocapra americana (Pronghorn) protein is Core protein VP7 (Segment-7).